The following is a 273-amino-acid chain: Rhamnulose-1-phosphate aldolase (273 aa).

Residue Glu-117 is part of the active site. Residues His-140, His-142, and His-211 each contribute to the Zn(2+) site.

Belongs to the aldolase class II family. RhaD subfamily. Zn(2+) serves as cofactor.

Its subcellular location is the cytoplasm. The catalysed reaction is L-rhamnulose 1-phosphate = (S)-lactaldehyde + dihydroxyacetone phosphate. It participates in carbohydrate degradation; L-rhamnose degradation; glycerone phosphate from L-rhamnose: step 3/3. In terms of biological role, catalyzes the reversible cleavage of L-rhamnulose-1-phosphate to dihydroxyacetone phosphate (DHAP) and L-lactaldehyde. The protein is Rhamnulose-1-phosphate aldolase of Listeria innocua serovar 6a (strain ATCC BAA-680 / CLIP 11262).